Consider the following 241-residue polypeptide: E3 ubiquitin-protein ligase RNF166 (241 aa).

The interval 8–30 (VASSQHRQHHSHQSLATPSSADS) is disordered. An RING-type zinc finger spans residues 37 to 77 (CPICLEVYYKPVAIGSCGHTFCGECLQPCLQVSSPLCPLCR). Cysteine 102, cysteine 105, histidine 117, and cysteine 121 together coordinate Zn(2+). The C2HC RNF-type zinc finger occupies 102–121 (CRGCSKKVTLAKMRAHISSC). The 17-residue stretch at 225-241 (DEEAALQAALALSLSEN) folds into the UIM domain.

Its subcellular location is the cytoplasm. The catalysed reaction is S-ubiquitinyl-[E2 ubiquitin-conjugating enzyme]-L-cysteine + [acceptor protein]-L-lysine = [E2 ubiquitin-conjugating enzyme]-L-cysteine + N(6)-ubiquitinyl-[acceptor protein]-L-lysine.. It participates in protein modification; protein ubiquitination. In terms of biological role, E3 ubiquitin-protein ligase that promotes the ubiquitination of different substrates. This Xenopus laevis (African clawed frog) protein is E3 ubiquitin-protein ligase RNF166 (rnf166).